An 856-amino-acid chain; its full sequence is DNA mismatch repair protein MutS (856 aa).

Position 605 to 612 (605 to 612) interacts with ATP; the sequence is GPNMSGKS.

The protein belongs to the DNA mismatch repair MutS family.

Its function is as follows. This protein is involved in the repair of mismatches in DNA. It is possible that it carries out the mismatch recognition step. This protein has a weak ATPase activity. This chain is DNA mismatch repair protein MutS, found in Lysinibacillus sphaericus (strain C3-41).